The following is a 167-amino-acid chain: NADH-quinone oxidoreductase subunit B 2 (167 aa).

4 residues coordinate [4Fe-4S] cluster: Cys38, Cys39, Cys103, and Cys132.

Belongs to the complex I 20 kDa subunit family. In terms of assembly, NDH-1 is composed of 14 different subunits. Subunits NuoB, C, D, E, F, and G constitute the peripheral sector of the complex. [4Fe-4S] cluster is required as a cofactor.

It is found in the cell inner membrane. It carries out the reaction a quinone + NADH + 5 H(+)(in) = a quinol + NAD(+) + 4 H(+)(out). In terms of biological role, NDH-1 shuttles electrons from NADH, via FMN and iron-sulfur (Fe-S) centers, to quinones in the respiratory chain. The immediate electron acceptor for the enzyme in this species is believed to be ubiquinone. Couples the redox reaction to proton translocation (for every two electrons transferred, four hydrogen ions are translocated across the cytoplasmic membrane), and thus conserves the redox energy in a proton gradient. The sequence is that of NADH-quinone oxidoreductase subunit B 2 from Rhizobium meliloti (strain 1021) (Ensifer meliloti).